Consider the following 194-residue polypeptide: Dephospho-CoA kinase (194 aa).

Residues 3–194 (TIGLTGGIGS…EQVDGFWGGL (192 aa)) enclose the DPCK domain. 11-16 (GSGKST) contacts ATP.

Belongs to the CoaE family.

Its subcellular location is the cytoplasm. The enzyme catalyses 3'-dephospho-CoA + ATP = ADP + CoA + H(+). It participates in cofactor biosynthesis; coenzyme A biosynthesis; CoA from (R)-pantothenate: step 5/5. In terms of biological role, catalyzes the phosphorylation of the 3'-hydroxyl group of dephosphocoenzyme A to form coenzyme A. The sequence is that of Dephospho-CoA kinase from Corynebacterium jeikeium (strain K411).